The primary structure comprises 102 residues: MNGQNIRIRLKAFDHRILDTSTREIVNTAKRTGAQVRGPIPLPTRIEKFTVNRSPHVDKKSREQFEMRTHKRLLDIVDPTPQTVDALMKLDLAAGVDVEIKL.

Belongs to the universal ribosomal protein uS10 family. As to quaternary structure, part of the 30S ribosomal subunit.

Functionally, involved in the binding of tRNA to the ribosomes. The sequence is that of Small ribosomal subunit protein uS10 from Rhodopseudomonas palustris (strain HaA2).